Reading from the N-terminus, the 962-residue chain is Alpha-glucan phosphorylase 1 (962 aa).

A chloroplast-targeting transit peptide spans 1-63 (MDTMRISGVS…RSFLSVKSIS (63 aa)). The interval 525–552 (AKDAQNGVKTEQEEEKTAGEEEEDEVIP) is disordered. The residue at position 808 (K808) is an N6-(pyridoxal phosphate)lysine.

The protein belongs to the glycogen phosphorylase family. Requires pyridoxal 5'-phosphate as cofactor.

It localises to the plastid. It is found in the chloroplast stroma. It carries out the reaction [(1-&gt;4)-alpha-D-glucosyl](n) + phosphate = [(1-&gt;4)-alpha-D-glucosyl](n-1) + alpha-D-glucose 1-phosphate. In terms of biological role, phosphorylase is an important allosteric enzyme in carbohydrate metabolism. Enzymes from different sources differ in their regulatory mechanisms and in their natural substrates. However, all known phosphorylases share catalytic and structural properties. May be not required for the degradation of starch, but the phosphorolysis of starch may play an important role in water stress tolerance. The chain is Alpha-glucan phosphorylase 1 (PHS1) from Arabidopsis thaliana (Mouse-ear cress).